The following is a 60-amino-acid chain: Large ribosomal subunit protein bL32 (60 aa).

Residues 1 to 22 (MAVPKKKTSKSRRDMRRSHHAL) show a composition bias toward basic residues. A disordered region spans residues 1 to 27 (MAVPKKKTSKSRRDMRRSHHALKGSAY).

Belongs to the bacterial ribosomal protein bL32 family.

The protein is Large ribosomal subunit protein bL32 of Rhodospirillum centenum (strain ATCC 51521 / SW).